The sequence spans 152 residues: Ribosome maturation factor RimP (152 aa).

Belongs to the RimP family.

It localises to the cytoplasm. In terms of biological role, required for maturation of 30S ribosomal subunits. In Ruminiclostridium cellulolyticum (strain ATCC 35319 / DSM 5812 / JCM 6584 / H10) (Clostridium cellulolyticum), this protein is Ribosome maturation factor RimP.